Here is a 210-residue protein sequence, read N- to C-terminus: Dephospho-CoA kinase (210 aa).

Positions 4 to 202 (WVGLTGGIGS…AFYSGIFASK (199 aa)) constitute a DPCK domain. 12–17 (GSGKSA) contributes to the ATP binding site.

This sequence belongs to the CoaE family.

It is found in the cytoplasm. The catalysed reaction is 3'-dephospho-CoA + ATP = ADP + CoA + H(+). It functions in the pathway cofactor biosynthesis; coenzyme A biosynthesis; CoA from (R)-pantothenate: step 5/5. In terms of biological role, catalyzes the phosphorylation of the 3'-hydroxyl group of dephosphocoenzyme A to form coenzyme A. The chain is Dephospho-CoA kinase from Neisseria meningitidis serogroup A / serotype 4A (strain DSM 15465 / Z2491).